The chain runs to 181 residues: Isopentenyl-diphosphate Delta-isomerase (181 aa).

The Mn(2+) site is built by His24 and His30. A Nudix hydrolase domain is found at 28–168; sequence LLHLAFSVLL…PDTFSVWFPT (141 aa). The active site involves Cys68. A Mg(2+)-binding site is contributed by Cys68. His70 contributes to the Mn(2+) binding site. Position 88 (Glu88) interacts with Mg(2+). Mn(2+)-binding residues include Glu117 and Glu119. Glu119 is a catalytic residue.

It belongs to the IPP isomerase type 1 family. The cofactor is Mg(2+). Requires Mn(2+) as cofactor.

The protein resides in the cytoplasm. The enzyme catalyses isopentenyl diphosphate = dimethylallyl diphosphate. It participates in isoprenoid biosynthesis; dimethylallyl diphosphate biosynthesis; dimethylallyl diphosphate from isopentenyl diphosphate: step 1/1. In terms of biological role, catalyzes the 1,3-allylic rearrangement of the homoallylic substrate isopentenyl (IPP) to its highly electrophilic allylic isomer, dimethylallyl diphosphate (DMAPP). In Aliivibrio fischeri (strain ATCC 700601 / ES114) (Vibrio fischeri), this protein is Isopentenyl-diphosphate Delta-isomerase.